The following is a 293-amino-acid chain: C-type lectin domain family 4 member G (293 aa).

Over 1–31 the chain is Cytoplasmic; sequence MDTTRYSKWGGSSEEVPGGPWGRWVHWSRRP. Ser12 bears the Phosphoserine mark. A helical; Signal-anchor for type II membrane protein transmembrane segment spans residues 32-52; sequence LFLALAVLVTTVLWAVILSIL. Over 53-293 the chain is Extracellular; sequence LSKASTERAA…GWICEKRHNC (241 aa). Asn73 is a glycosylation site (N-linked (GlcNAc...) asparagine). A coiled-coil region spans residues 96-136; the sequence is SGTQAQLQTTRAELGEAQAKLMEQESALRELRERVTQGLAE. Asn159 is a glycosylation site (N-linked (GlcNAc...) asparagine). A C-type lectin domain is found at 172 to 287; that stretch reads FEGSCYFFSV…CDSEKDGWIC (116 aa). A disulfide bridge links Cys264 with Cys278.

(Microbial infection) Interacts with Japanese encephalitis virus envelope protein E. As to quaternary structure, (Microbial infection) Interacts with ebolavirus glycoprotein. In terms of assembly, (Microbial infection) Interacts with SARS-CoV spike glycoprotein. (Microbial infection) Interacts with lassa virus and Lymphocytic choriomeningitis virus glycoprotein. As to expression, expressed exclusively in fetal and adult liver and in lymph nodes. Specifically expressed by endothelial cells lining lymph node and liver sinuses (at protein level).

It localises to the cell membrane. Binds mannose, N-acetylglucosamine (GlcNAc) and fucose, but not galactose, in a Ca(2+)-dependent manner, in vitro. In terms of biological role, (Microbial infection) Acts as a receptor for Japanese encephalitis virus. Functionally, (Microbial infection) Acts as a receptor for Ebolavirus. Its function is as follows. (Microbial infection) Acts as a receptor for SARS-CoV. (Microbial infection) Acts as a receptor for Lassa virus and Lymphocytic choriomeningitis virus glycoprotein. The polypeptide is C-type lectin domain family 4 member G (CLEC4G) (Homo sapiens (Human)).